A 169-amino-acid polypeptide reads, in one-letter code: Phosphopantetheine adenylyltransferase (169 aa).

S8 provides a ligand contact to substrate. ATP-binding positions include 8–9 (SF) and H16. Substrate is bound by residues K40, T72, and R86. ATP-binding positions include 87–89 (GLR), E97, and 122–128 (YSFLSSS).

This sequence belongs to the bacterial CoaD family. Homohexamer. The cofactor is Mg(2+).

The protein localises to the cytoplasm. It catalyses the reaction (R)-4'-phosphopantetheine + ATP + H(+) = 3'-dephospho-CoA + diphosphate. It participates in cofactor biosynthesis; coenzyme A biosynthesis; CoA from (R)-pantothenate: step 4/5. Reversibly transfers an adenylyl group from ATP to 4'-phosphopantetheine, yielding dephospho-CoA (dPCoA) and pyrophosphate. The polypeptide is Phosphopantetheine adenylyltransferase (Cyanothece sp. (strain PCC 7425 / ATCC 29141)).